Here is a 484-residue protein sequence, read N- to C-terminus: Cobyric acid synthase (484 aa).

The GATase cobBQ-type domain maps to 249 to 438 (QLRVAVPVFT…LHGIFDRPET (190 aa)). C330 serves as the catalytic Nucleophile. H430 is a catalytic residue.

This sequence belongs to the CobB/CobQ family. CobQ subfamily.

It functions in the pathway cofactor biosynthesis; adenosylcobalamin biosynthesis. In terms of biological role, catalyzes amidations at positions B, D, E, and G on adenosylcobyrinic A,C-diamide. NH(2) groups are provided by glutamine, and one molecule of ATP is hydrogenolyzed for each amidation. In Vibrio cholerae serotype O1 (strain ATCC 39315 / El Tor Inaba N16961), this protein is Cobyric acid synthase.